Consider the following 312-residue polypeptide: Homoserine kinase (312 aa).

91 to 101 provides a ligand contact to ATP; sequence PVASGLGSSAC.

Belongs to the GHMP kinase family. Homoserine kinase subfamily.

It localises to the cytoplasm. It catalyses the reaction L-homoserine + ATP = O-phospho-L-homoserine + ADP + H(+). It functions in the pathway amino-acid biosynthesis; L-threonine biosynthesis; L-threonine from L-aspartate: step 4/5. Its function is as follows. Catalyzes the ATP-dependent phosphorylation of L-homoserine to L-homoserine phosphate. This Blochmanniella pennsylvanica (strain BPEN) protein is Homoserine kinase.